Reading from the N-terminus, the 429-residue chain is Arrestin-related trafficking adapter 10 (429 aa).

Belongs to the ART10 family.

It localises to the cytoplasm. Its function is as follows. May regulate endocytosis by recruiting RSP5 ubiquitin ligase activity to specific plasma membrane proteins in response to extracellular stimuli. This is Arrestin-related trafficking adapter 10 (ART10) from Lachancea thermotolerans (strain ATCC 56472 / CBS 6340 / NRRL Y-8284) (Yeast).